The sequence spans 258 residues: Snake venom serine protease 5 (258 aa).

Residues 1 to 18 (MVLIRVLANLLILQLSYA) form the signal peptide. Residues 19 to 24 (QKSSEL) constitute a propeptide that is removed on maturation. In terms of domain architecture, Peptidase S1 spans 25–249 (VVGGRPCNIN…HLDWIQNIIA (225 aa)). 6 cysteine pairs are disulfide-bonded: C31-C163, C50-C66, C98-C256, C142-C210, C174-C189, and C200-C225. Residue N44 is glycosylated (N-linked (GlcNAc...) asparagine). The active-site Charge relay system is H65. N-linked (GlcNAc...) asparagine glycosylation is present at N103. The active-site Charge relay system is the D110. Residues N121, N122, N154, and N170 are each glycosylated (N-linked (GlcNAc...) asparagine). The Charge relay system role is filled by S204. Residue N251 is glycosylated (N-linked (GlcNAc...) asparagine).

Belongs to the peptidase S1 family. Snake venom subfamily. As to quaternary structure, monomer. In terms of tissue distribution, expressed by the venom gland.

It localises to the secreted. Functionally, snake venom serine protease that may act in the hemostasis system of the prey. The protein is Snake venom serine protease 5 of Trimeresurus stejnegeri (Chinese green tree viper).